The sequence spans 520 residues: Cytochrome P450 734A1 (520 aa).

Residues 13 to 33 (VLVLSVILSLVIVKGMSLLWW) form a helical membrane-spanning segment. A heme-binding site is contributed by cysteine 463.

This sequence belongs to the cytochrome P450 family. Requires heme as cofactor.

The protein localises to the membrane. In terms of biological role, cytochrome P450 involved in brassinosteroids (BRs) inactivation and regulation of BRs homeostasis. Inactivates the BRs castasterone (CS) and brassinolide (BL) through carbon 26 hydroxylation. Acts in association with CYP72C1 to inactivate BRs and modulate photomorphogenesis. The protein is Cytochrome P450 734A1 (CYP734A1) of Arabidopsis thaliana (Mouse-ear cress).